Here is a 217-residue protein sequence, read N- to C-terminus: Cytidylate kinase (217 aa).

11 to 19 contributes to the ATP binding site; the sequence is GPAGAGKST.

This sequence belongs to the cytidylate kinase family. Type 1 subfamily.

It localises to the cytoplasm. The enzyme catalyses CMP + ATP = CDP + ADP. The catalysed reaction is dCMP + ATP = dCDP + ADP. This chain is Cytidylate kinase, found in Clostridium perfringens (strain SM101 / Type A).